The chain runs to 214 residues: Putative nickel/cobalt efflux system MJ1092 (214 aa).

The next 6 helical transmembrane spans lie at 2–22 (VMIM…LHAL), 46–66 (ILLG…LGIL), 79–99 (VHDM…IWII), 116–136 (VITL…AVLL), 149–169 (IYVA…AVAF), and 188–208 (LPLI…AHPI).

The protein belongs to the NiCoT transporter (TC 2.A.52) family.

The protein localises to the cell membrane. Its function is as follows. Efflux system for nickel and cobalt. The chain is Putative nickel/cobalt efflux system MJ1092 from Methanocaldococcus jannaschii (strain ATCC 43067 / DSM 2661 / JAL-1 / JCM 10045 / NBRC 100440) (Methanococcus jannaschii).